The primary structure comprises 49 residues: Unknown protein from spot 75 of 2D-PAGE of etiolated coleoptile (49 aa).

The chain is Unknown protein from spot 75 of 2D-PAGE of etiolated coleoptile from Zea mays (Maize).